Reading from the N-terminus, the 518-residue chain is Probable glycosyltransferase At5g03795 (518 aa).

Residues 1-25 (MGDEDVDGKCKNMSACSSTTSYSTK) lie on the Cytoplasmic side of the membrane. Residues 26–46 (LFLFMVPLVVISGFVFVNIGP) traverse the membrane as a helical; Signal-anchor for type II membrane protein segment. Over 47-518 (KDSTSLLTSL…RRLNVKIREV (472 aa)) the chain is Lumenal. Residues Asn-104, Asn-113, Asn-120, Asn-282, and Asn-320 are each glycosylated (N-linked (GlcNAc...) asparagine).

It belongs to the glycosyltransferase 47 family.

The protein resides in the golgi apparatus membrane. May be involved in cell wall biosynthesis. The polypeptide is Probable glycosyltransferase At5g03795 (Arabidopsis thaliana (Mouse-ear cress)).